The following is a 272-amino-acid chain: Energy-coupling factor transporter ATP-binding protein EcfA1 (272 aa).

Positions 2–237 (IKVSDVCFSY…KNIIEKAKID (236 aa)) constitute an ABC transporter domain. An ATP-binding site is contributed by 37–44 (GHNGSGKS).

It belongs to the ABC transporter superfamily. Energy-coupling factor EcfA family. As to quaternary structure, forms a stable energy-coupling factor (ECF) transporter complex composed of 2 membrane-embedded substrate-binding proteins (S component), 2 ATP-binding proteins (A component) and 2 transmembrane proteins (T component).

The protein resides in the cell membrane. Functionally, ATP-binding (A) component of a common energy-coupling factor (ECF) ABC-transporter complex. Unlike classic ABC transporters this ECF transporter provides the energy necessary to transport a number of different substrates. The sequence is that of Energy-coupling factor transporter ATP-binding protein EcfA1 from Mesomycoplasma hyopneumoniae (strain J / ATCC 25934 / NCTC 10110) (Mycoplasma hyopneumoniae).